The following is a 738-amino-acid chain: Exocyst complex component 3 (738 aa).

A coiled-coil region spans residues 28–91 (LEKVEQYRHR…DEVERLLRGV (64 aa)).

It belongs to the SEC6 family. As to quaternary structure, the exocyst complex is composed of Sec3/Exoc1, Sec5/Exoc2, Sec6/Exoc3, Sec8/Exoc4, Sec10/Exoc5, Sec15/Exoc6, Exo70/Exoc7 and Exo84/Exoc8.

In terms of biological role, component of the exocyst complex involved in the docking of exocytic vesicles with fusion sites on the plasma membrane. This chain is Exocyst complex component 3, found in Drosophila melanogaster (Fruit fly).